A 718-amino-acid polypeptide reads, in one-letter code: Phospholipid phosphatase-related protein type 3 (718 aa).

A run of 3 helical transmembrane segments spans residues 18-38 (LPCF…SLYF), 70-90 (LIPL…SIMV), and 133-153 (FVGV…VIQL). Asparagine 169 carries an N-linked (GlcNAc...) asparagine glycan. 3 helical membrane-spanning segments follow: residues 207 to 227 (HATL…SVIS), 233 to 253 (LKPI…LTQI), and 263 to 283 (VYAG…HAVG). The segment at 313-347 (SVYQQNKSVSTDELGPPGRLEGAPRPVAREKTSLG) is disordered. Over residues 314-323 (VYQQNKSVST) the composition is skewed to polar residues. Asparagine 318 carries N-linked (GlcNAc...) asparagine glycosylation. Phosphoserine is present on residues serine 322 and serine 353. Position 376 is a phosphothreonine (threonine 376). Residues 416–488 (LEGRGLGLPD…GPRVILPPRA (73 aa)) are disordered. The residue at position 428 (serine 428) is a Phosphoserine. Residues 439–462 (MAEEEEEEEDEEEEEEEEEEEDEG) are compositionally biased toward acidic residues. At serine 508 the chain carries Phosphoserine. A compositionally biased stretch (low complexity) spans 545–571 (APGAPGPKAAETASSSSASSDSSQYRS). Residues 545 to 577 (APGAPGPKAAETASSSSASSDSSQYRSPSDRDS) are disordered. Serine 641 carries the phosphoserine modification. The span at 664–680 (GEGLPPLGAADGALGPG) shows a compositional bias: low complexity. The disordered stretch occupies residues 664–702 (GEGLPPLGAADGALGPGSRESTLRRHAGGLGLAEREAEA).

It belongs to the PA-phosphatase related phosphoesterase family.

Its subcellular location is the membrane. This is Phospholipid phosphatase-related protein type 3 from Homo sapiens (Human).